The following is a 502-amino-acid chain: Type II methyltransferase M.HincII (502 aa).

It belongs to the N(4)/N(6)-methyltransferase family.

The catalysed reaction is a 2'-deoxyadenosine in DNA + S-adenosyl-L-methionine = an N(6)-methyl-2'-deoxyadenosine in DNA + S-adenosyl-L-homocysteine + H(+). In terms of biological role, a gamma subtype methylase that recognizes the double-stranded sequence 5'-GTYRAC-3', methylates A-5 on both strands, and protects the DNA from cleavage by the HincII endonuclease. This chain is Type II methyltransferase M.HincII, found in Haemophilus influenzae.